Reading from the N-terminus, the 622-residue chain is Low affinity potassium transport system protein Kup (622 aa).

Helical transmembrane passes span 9–29 (LPALTLAAIGVVYGDIGTSPL), 49–69 (VFGFLSLIFWLLIFTVSIKYI), 101–121 (VLVILGLIGGSFFYGEVVITP), 137–157 (PQLDTWIVPISIIVLTLLFVI), 163–183 (GMVGKLFAPIMLIWFLLLAVL), 213–233 (VSFIALGAVVLSITGVEALYA), 247–267 (WFSVVLPSLVLNYFGQGALLL), 276–296 (PFFLLAPEWALIPMLIIATLA), 337–357 (IYIPFINWLLYVSVVIVIVSF), 363–383 (LAAAYGIAVTGTMVLTSILSA), 395–415 (LFVGLMLVAFLCIDIPLFSAN), and 419–439 (IVSGGWLPLSLGMVMFTVMTT).

This sequence belongs to the HAK/KUP transporter (TC 2.A.72) family.

It localises to the cell inner membrane. The enzyme catalyses K(+)(in) + H(+)(in) = K(+)(out) + H(+)(out). Responsible for the low-affinity transport of potassium into the cell. Likely operates as a K(+):H(+) symporter. The sequence is that of Low affinity potassium transport system protein Kup from Klebsiella pneumoniae subsp. pneumoniae (strain ATCC 700721 / MGH 78578).